The primary structure comprises 160 residues: SsrA-binding protein (160 aa).

The protein belongs to the SmpB family.

The protein resides in the cytoplasm. Functionally, required for rescue of stalled ribosomes mediated by trans-translation. Binds to transfer-messenger RNA (tmRNA), required for stable association of tmRNA with ribosomes. tmRNA and SmpB together mimic tRNA shape, replacing the anticodon stem-loop with SmpB. tmRNA is encoded by the ssrA gene; the 2 termini fold to resemble tRNA(Ala) and it encodes a 'tag peptide', a short internal open reading frame. During trans-translation Ala-aminoacylated tmRNA acts like a tRNA, entering the A-site of stalled ribosomes, displacing the stalled mRNA. The ribosome then switches to translate the ORF on the tmRNA; the nascent peptide is terminated with the 'tag peptide' encoded by the tmRNA and targeted for degradation. The ribosome is freed to recommence translation, which seems to be the essential function of trans-translation. The sequence is that of SsrA-binding protein from Zymomonas mobilis subsp. mobilis (strain ATCC 31821 / ZM4 / CP4).